A 182-amino-acid chain; its full sequence is Receptor activity-modifying protein 2 (182 aa).

Positions 1–45 (MAPLRVERAPGGSQLAVTSAQRPAALRLPPLLLLLLLLLLGAVST) are cleaved as a signal peptide. At 46–150 (SPESLNQSHP…VQPTFSDPPE (105 aa)) the chain is on the extracellular side. Asn51, Asn92, and Asn137 each carry an N-linked (GlcNAc...) asparagine glycan. Cystine bridges form between Cys76–Cys106 and Cys91–Cys138. The helical transmembrane segment at 151–172 (DVLLAMIIAPICLIPFLVTLVV) threads the bilayer. At 173–182 (WRSKDGDAQA) the chain is on the cytoplasmic side.

Belongs to the RAMP family. In terms of assembly, heterodimer of CALCRL and RAMP2; the interaction forms the receptor complex for adrenomedullin/ADM. Heterodimer of CALCR and RAMP2; interaction forms the AMYR2 receptor complex for calcitonin/CALC and amylin/IAPP.

The protein localises to the cell membrane. In terms of biological role, accessory protein that interacts with and modulates the function of G-protein coupled receptors including calcitonin gene-related peptide type 1 receptor (CALCRL) and calcitonin receptor (CALCR). Required for the transport of CALCRL to the plasma membrane. Together with CALCRL, form a receptor complex for adrenomedullin/ADM. Together with CALCR, act as a receptor complex for calcitonin/CT/CALC. Together with CALCR, also act as a receptor complex for amylin/IAPP. This Rattus norvegicus (Rat) protein is Receptor activity-modifying protein 2.